The following is a 131-amino-acid chain: Profilin-2 (131 aa).

The protein belongs to the profilin family. In terms of assembly, occurs in many kinds of cells as a complex with monomeric actin in a 1:1 ratio.

The protein resides in the cytoplasm. Its subcellular location is the cytoskeleton. Functionally, binds to actin and affects the structure of the cytoskeleton. At high concentrations, profilin prevents the polymerization of actin, whereas it enhances it at low concentrations. By binding to PIP2, it inhibits the formation of IP3 and DG. The chain is Profilin-2 from Malus domestica (Apple).